Here is a 244-residue protein sequence, read N- to C-terminus: uncharacterized protein (244 aa).

In terms of domain architecture, HTH gntR-type spans 12–80; sequence VALWRQIADR…QGRGTMIERK (69 aa). Residues 40 to 59 constitute a DNA-binding region (H-T-H motif); sequence ETALAAEFGVNRHTVRSALA.

This is an uncharacterized protein from Rhizobium meliloti (strain 1021) (Ensifer meliloti).